The sequence spans 517 residues: MGCVFCKKLEPAPKEDVGLEGDFRSQGAEERYYPDPTQGRSSSISPQPISPAFLNVGNIRSVSGTGVTIFVALYDYEARTGDDLTFTKGEKFHILNNTEYDWWEARSLSSGRTGYVPSNYVAPVDSIQAEEWYFGKISRKDAERQLLSDGNPQGAFLIRESETTKGAYSLSIRDWDQNRGDHIKHYKIRKLDMGGYYITTRAQFESVQDLVRHYMEVNDGLCYLLTAPCMVMKPQTLGLAKDAWEIDRNSIALDRRLGTGCFGDVWLGTWNCSTKVAVKTLKPGTMSPKAFLEEAQIMKLLRHDKLVQLYAVVSEEPIYIVTEFMCYGSLLDFLKDRKGHNLMLPNLVDMAAQVAEGMAYMERMNYIHRDLRAANILVGEHLICKIADFGLARLIVDDEYNPQQGTKFPIKWTAPEAALFGRFTVKSDVWSFGILLTELITKGRVPYPGMNNREVLEQVEHGYHMPCPPGCPVSLYEVMEQTWRLDPEERPTFEYLQSFLEDYFTSTEPQYQPGDQT.

Residue Gly-2 is the site of N-myristoyl glycine attachment. 2 S-palmitoyl cysteine lipidation sites follow: Cys-3 and Cys-6. Over residues Val-17 to Tyr-33 the composition is skewed to basic and acidic residues. A disordered region spans residues Val-17–Pro-46. At Tyr-32 the chain carries Phosphotyrosine. Ser-50 is modified (phosphoserine). Residues Thr-65–Ser-126 enclose the SH3 domain. The SH2 domain maps to Trp-132–Cys-229. The residue at position 196 (Tyr-196) is a Phosphotyrosine. Ser-206 bears the Phosphoserine mark. The Protein kinase domain occupies Ile-251–Phe-504. Residues Leu-257–Val-265 and Lys-279 each bind ATP. Asp-370 functions as the Proton acceptor in the catalytic mechanism. Tyr-400 carries the post-translational modification Phosphotyrosine; by autocatalysis. The residue at position 511 (Tyr-511) is a Phosphotyrosine; by SRC.

This sequence belongs to the protein kinase superfamily. Tyr protein kinase family. SRC subfamily. In terms of assembly, interacts with ITGB1, ITGB2, MS4A2/FCER1B and FCGR2. Interacts (via SH2 domain) with SYK (tyrosine phosphorylated). Interacts (via SH2 domain) with FLT3 (tyrosine phosphorylated). Interacts with PTK2/FAK1. Interacts (via SH2 domain) with HCLS1 (tyrosine phosphorylated by SYK). Interacts with SIRPA and PTPNS1. Interacts (not phosphorylated on tyrosine residues) with CBL; FGR tyrosine phosphorylation promotes dissociation. Interacts with CLNK. Post-translationally, ubiquitinated. Becomes ubiquitinated in response to ITGB2 signaling; this does not lead to degradation. Phosphorylated. Autophosphorylated on tyrosine residues. Becomes phosphorylated in response to FCGR2 engagement, cell adhesion and signaling by ITGB2. Prior phosphorylation at Tyr-511 by SRC inhibits ulterior autophosphorylation at Tyr-400. As to expression, detected in brain cortex (at protein level).

The protein resides in the cell membrane. Its subcellular location is the cell projection. It is found in the ruffle membrane. It localises to the cytoplasm. The protein localises to the cytosol. The protein resides in the cytoskeleton. Its subcellular location is the mitochondrion inner membrane. It is found in the mitochondrion intermembrane space. It catalyses the reaction L-tyrosyl-[protein] + ATP = O-phospho-L-tyrosyl-[protein] + ADP + H(+). Its activity is regulated as follows. Activated by autophosphorylation. Prior phosphorylation at Tyr-511 by SRC inhibits ulterior autophosphorylation at Tyr-400. Activated by phorbol myristate acetate, phosphatidic acid and poly-Lys. Binding (via SH2 domain) of HCLS1 that is already phosphorylated by SYK strongly increases kinase activity. Functionally, non-receptor tyrosine-protein kinase that transmits signals from cell surface receptors devoid of kinase activity and contributes to the regulation of immune responses, including neutrophil, monocyte, macrophage and mast cell functions, cytoskeleton remodeling in response to extracellular stimuli, phagocytosis, cell adhesion and migration. Promotes mast cell degranulation, release of inflammatory cytokines and IgE-mediated anaphylaxis. Acts downstream of receptors that bind the Fc region of immunoglobulins, such as MS4A2/FCER1B, FCER1G and FCGR2. Acts downstream of ITGB1 and ITGB2, and regulates actin cytoskeleton reorganization, cell spreading and adhesion. Depending on the context, activates or inhibits cellular responses. Functions as a negative regulator of ITGB2 signaling, phagocytosis and SYK activity in monocytes. Required for normal ITGB1 and ITGB2 signaling, normal cell spreading and adhesion in neutrophils and macrophages. Functions as a positive regulator of cell migration and regulates cytoskeleton reorganization via RAC1 activation. Phosphorylates SYK (in vitro) and promotes SYK-dependent activation of AKT1 and MAP kinase signaling. Phosphorylates PLD2 in antigen-stimulated mast cells, leading to PLD2 activation and the production of the signaling molecules lysophosphatidic acid and diacylglycerol. Promotes activation of PIK3R1. Phosphorylates FASLG, and thereby regulates its ubiquitination and subsequent internalization. Phosphorylates ABL1. Promotes phosphorylation of CBL, CTTN, PIK3R1, PTK2/FAK1, PTK2B/PYK2 and VAV2. Phosphorylates HCLS1 that has already been phosphorylated by SYK, but not unphosphorylated HCLS1. Together with CLNK, it acts as a negative regulator of natural killer cell-activating receptors and inhibits interferon-gamma production. This Rattus norvegicus (Rat) protein is Tyrosine-protein kinase Fgr (Fgr).